The primary structure comprises 306 residues: Aspartate carbamoyltransferase catalytic subunit (306 aa).

Carbamoyl phosphate-binding residues include R55 and T56. Residue K84 coordinates L-aspartate. Carbamoyl phosphate contacts are provided by R105, H133, and Q136. L-aspartate contacts are provided by R166 and R227. Residues L265 and P266 each contribute to the carbamoyl phosphate site.

Belongs to the aspartate/ornithine carbamoyltransferase superfamily. ATCase family. In terms of assembly, heterododecamer (2C3:3R2) of six catalytic PyrB chains organized as two trimers (C3), and six regulatory PyrI chains organized as three dimers (R2).

It carries out the reaction carbamoyl phosphate + L-aspartate = N-carbamoyl-L-aspartate + phosphate + H(+). Its pathway is pyrimidine metabolism; UMP biosynthesis via de novo pathway; (S)-dihydroorotate from bicarbonate: step 2/3. Its function is as follows. Catalyzes the condensation of carbamoyl phosphate and aspartate to form carbamoyl aspartate and inorganic phosphate, the committed step in the de novo pyrimidine nucleotide biosynthesis pathway. This is Aspartate carbamoyltransferase catalytic subunit from Aeromonas salmonicida (strain A449).